A 536-amino-acid chain; its full sequence is Phosphoenolpyruvate carboxykinase (ATP) (536 aa).

Substrate-binding residues include R61, Y195, and K201. ATP is bound by residues K201, H220, and 236 to 244 (GLSGTGKTT). The Mn(2+) site is built by K201 and H220. D257 is a binding site for Mn(2+). Residues E285, R322, and T447 each coordinate ATP. R322 is a substrate binding site.

It belongs to the phosphoenolpyruvate carboxykinase (ATP) family. Requires Mn(2+) as cofactor.

The protein resides in the cytoplasm. It carries out the reaction oxaloacetate + ATP = phosphoenolpyruvate + ADP + CO2. It participates in carbohydrate biosynthesis; gluconeogenesis. Functionally, involved in the gluconeogenesis. Catalyzes the conversion of oxaloacetate (OAA) to phosphoenolpyruvate (PEP) through direct phosphoryl transfer between the nucleoside triphosphate and OAA. The protein is Phosphoenolpyruvate carboxykinase (ATP) of Sinorhizobium medicae (strain WSM419) (Ensifer medicae).